Consider the following 512-residue polypeptide: Probable cytochrome P450 6d2 (512 aa).

Cys457 is a heme binding site.

The protein belongs to the cytochrome P450 family. Heme is required as a cofactor.

It is found in the endoplasmic reticulum membrane. The protein resides in the microsome membrane. Functionally, may be involved in the metabolism of insect hormones and in the breakdown of synthetic insecticides. The chain is Probable cytochrome P450 6d2 (Cyp6d2) from Drosophila melanogaster (Fruit fly).